Consider the following 473-residue polypeptide: H(+)/Cl(-) exchange transporter ClcA (473 aa).

At 1-32 the chain is on the cytoplasmic side; it reads MKTDTSTFLAQQIVRLRRRDQIRRLMQRDKTP. A helical transmembrane segment spans residues 33–69; sequence LAILFMAAVVGTLTGLVGVAFEKTVSWVQNMRIGALV. Residues 70-76 are Periplasmic-facing; the sequence is QVADHAF. A helical membrane pass occupies residues 77–100; that stretch reads LLWPLAFILSALLAMVGYFLVRKF. Positions 106–110 match the Selectivity filter part_1 motif; that stretch reads GSGIP. Ser107 lines the chloride pocket. The helical intramembrane region spans 109–116; it reads IPEIEGAL. The Cytoplasmic segment spans residues 117–123; that stretch reads EELRPVR. 2 helical membrane passes run 124 to 141 and 148 to 166; these read WWRV…TLGA and EGPT…LDVF. A Selectivity filter part_2 motif is present at residues 146–150; it reads GREGP. Topologically, residues 167 to 176 are cytoplasmic; the sequence is RMRSAEARHT. 2 consecutive intramembrane regions (helical) follow at residues 177–189 and 193–201; these read LLAT…LSAA and PLAGILFII. The Cytoplasmic portion of the chain corresponds to 202 to 214; sequence EEMRPQFRYNLIS. A helical membrane pass occupies residues 215–232; the sequence is IKAVFTGVIMSSIVFRIF. Residues 233 to 252 lie on the Periplasmic side of the membrane; sequence NGEAPIIEVGKLSDAPVNTL. A helical transmembrane segment spans residues 253 to 281; the sequence is WLYLILGIIFGCVGPVFNSLVLRTQDMFQ. Topologically, residues 282–287 are cytoplasmic; it reads RFHGGE. A helical membrane pass occupies residues 288-309; sequence IKKWVLMGGAIGGLCGILGLIE. The Periplasmic segment spans residues 310-329; that stretch reads PAAAGGGFNLIPIAAAGNFS. Transmembrane regions (helical) follow at residues 330–349 and 355–376; these read VGLL…LCFS and GIFA…MAAA. Residues 355–359 carry the Selectivity filter part_3 motif; the sequence is GIFAP. Residues Ile356 and Phe357 each coordinate chloride. Topologically, residues 377 to 386 are periplasmic; it reads VLFPQYHPEA. Residues 387 to 401 constitute an intramembrane region (helical); the sequence is GTFAIAGMGALMAAS. The segment at residues 402–404 is an intramembrane region (note=Loop between two helices); sequence VRA. An intramembrane region (helical) is located at residues 405 to 416; the sequence is PLTGIVLVLEMT. Positions 417 to 421 form an intramembrane region, note=Loop between two helices; that stretch reads DNYQL. A helical transmembrane segment spans residues 422–438; that stretch reads ILPMIITCLGATLLAQF. Topologically, residues 439–473 are cytoplasmic; sequence LGGKPLYSTILARTLAKQDAEQAAKNQNAPAGENT. Tyr445 lines the chloride pocket.

It belongs to the chloride channel (TC 2.A.49) family. ClcA subfamily. Homodimer.

It is found in the cell inner membrane. The catalysed reaction is 2 chloride(in) + H(+)(out) = 2 chloride(out) + H(+)(in). In terms of biological role, proton-coupled chloride transporter. Functions as antiport system and exchanges two chloride ions for 1 proton. Probably acts as an electrical shunt for an outwardly-directed proton pump that is linked to amino acid decarboxylation, as part of the extreme acid resistance (XAR) response. This is H(+)/Cl(-) exchange transporter ClcA from Salmonella paratyphi A (strain AKU_12601).